Consider the following 94-residue polypeptide: Co-chaperonin GroES (94 aa).

Belongs to the GroES chaperonin family. As to quaternary structure, heptamer of 7 subunits arranged in a ring. Interacts with the chaperonin GroEL.

It localises to the cytoplasm. Together with the chaperonin GroEL, plays an essential role in assisting protein folding. The GroEL-GroES system forms a nano-cage that allows encapsulation of the non-native substrate proteins and provides a physical environment optimized to promote and accelerate protein folding. GroES binds to the apical surface of the GroEL ring, thereby capping the opening of the GroEL channel. The sequence is that of Co-chaperonin GroES from Listeria monocytogenes serotype 4b (strain CLIP80459).